A 697-amino-acid polypeptide reads, in one-letter code: Potassium-transporting ATPase ATP-binding subunit (697 aa).

Helical transmembrane passes span proline 55–serine 75, serine 79–alanine 99, leucine 245–phenylalanine 265, and valine 271–isoleucine 291. The active-site 4-aspartylphosphate intermediate is aspartate 324. Residues aspartate 361, glutamate 365, phenylalanine 393–serine 400, and lysine 412 each bind ATP. Mg(2+)-binding residues include aspartate 535 and aspartate 539. Helical transmembrane passes span phenylalanine 605–methionine 625, alanine 633–methionine 653, and glycine 677–isoleucine 697.

The protein belongs to the cation transport ATPase (P-type) (TC 3.A.3) family. Type IA subfamily. The system is composed of three essential subunits: KdpA, KdpB and KdpC.

It localises to the cell membrane. It catalyses the reaction K(+)(out) + ATP + H2O = K(+)(in) + ADP + phosphate + H(+). Functionally, part of the high-affinity ATP-driven potassium transport (or Kdp) system, which catalyzes the hydrolysis of ATP coupled with the electrogenic transport of potassium into the cytoplasm. This subunit is responsible for energy coupling to the transport system and for the release of the potassium ions to the cytoplasm. The protein is Potassium-transporting ATPase ATP-binding subunit of Bacillus cereus (strain ZK / E33L).